A 488-amino-acid chain; its full sequence is Sucrose 6(F)-phosphate phosphorylase (488 aa).

Sucrose 6(F)-phosphate is bound by residues Asp-49, His-87, 195–197 (RLD), Glu-238, 295–296 (HD), 342–345 (DVHQ), and Arg-399. The active-site Nucleophile is Asp-197. Residue Glu-238 is the Proton donor/acceptor of the active site.

This sequence belongs to the glycosyl hydrolase 13 family. Sucrose phosphorylase subfamily. Monomer.

It catalyses the reaction sucrose 6(F)-phosphate + phosphate = beta-D-fructose 6-phosphate + alpha-D-glucose 1-phosphate. Catalyzes the reversible phosphorolysis of sucrose 6(F)-phosphate into alpha-D-glucose 1-phosphate (Glc1P) and D-fructose 6-phosphate. May be involved in a new pathway for the degradation of sucrose, which could become phosphorylated on its fructose moiety during uptake via a PTS system. To a lesser extent, can also reversibly act on sucrose in vitro. Is also able to catalyze transglycosylation reactions in vitro. The chain is Sucrose 6(F)-phosphate phosphorylase from Thermoanaerobacterium thermosaccharolyticum (strain ATCC 7956 / DSM 571 / NCIMB 9385 / NCA 3814 / NCTC 13789 / WDCM 00135 / 2032) (Clostridium thermosaccharolyticum).